The following is a 1122-amino-acid chain: Histidine kinase CKI1 (1122 aa).

Residues 1–12 (MMVKVTKLVASR) lie on the Cytoplasmic side of the membrane. A helical transmembrane segment spans residues 13-33 (PIVVFCVLAFLVVVFECIWIS). Over 34–345 (NWRTTTENLV…KHQAEKAKYQ (312 aa)) the chain is Extracellular. The helical transmembrane segment at 346 to 366 (LIVVMIFLGFGWPVWFVWFMM) threads the bilayer. At 367–1122 (QATRREMHMR…VIREIESKRH (756 aa)) the chain is on the cytoplasmic side. Residues 402 to 671 (NASHDIRGAL…CFQFNVLLTT (270 aa)) enclose the Histidine kinase domain. Residue His405 is modified to Phosphohistidine; by autocatalysis. Basic and acidic residues predominate over residues 918–928 (AERSPKHKVQE). The tract at residues 918-981 (AERSPKHKVQ…QETSKPSDDE (64 aa)) is disordered. Residues 987–1120 (RVLVVDDNFI…ANVIREIESK (134 aa)) form the Response regulatory domain. Asp1050 is modified (4-aspartylphosphate).

Homodimer. Interacts with AHP2 and AHP3. Expressed in vascular tissues of inflorescence stems and floral organs, especially in procambium cells, and in siliques.

It localises to the cell membrane. It catalyses the reaction ATP + protein L-histidine = ADP + protein N-phospho-L-histidine.. Functionally, essential protein. Functions as a histidine kinase and transmits the stress signal to a downstream MAPK cascade. This protein undergoes an ATP-dependent autophosphorylation at a conserved histidine residue in the kinase core, and a phosphoryl group is then transferred to a conserved aspartate residue in the receiver domain. Required for the development of megagametophyte in female gametophyte (embryo sac) independently of cytokinin. Contributes to vascular bundle formation and secondary growth in a cytokinin-independent manner, probably by promoting the maintenance of mitotic activity and/or identity of procambial cells. Seems to influence and promote the cytokinin signaling pathway. The polypeptide is Histidine kinase CKI1 (CKI1) (Arabidopsis thaliana (Mouse-ear cress)).